The chain runs to 74 residues: Translation initiation factor IF-1 2 (74 aa).

Positions 1-73 (MTKNKNVIEV…TRGRIVFRYR (73 aa)) constitute an S1-like domain.

It belongs to the IF-1 family. In terms of assembly, component of the 30S ribosomal translation pre-initiation complex which assembles on the 30S ribosome in the order IF-2 and IF-3, IF-1 and N-formylmethionyl-tRNA(fMet); mRNA recruitment can occur at any time during PIC assembly.

The protein resides in the cytoplasm. Its function is as follows. One of the essential components for the initiation of protein synthesis. Stabilizes the binding of IF-2 and IF-3 on the 30S subunit to which N-formylmethionyl-tRNA(fMet) subsequently binds. Helps modulate mRNA selection, yielding the 30S pre-initiation complex (PIC). Upon addition of the 50S ribosomal subunit IF-1, IF-2 and IF-3 are released leaving the mature 70S translation initiation complex. This is Translation initiation factor IF-1 2 from Streptomyces avermitilis (strain ATCC 31267 / DSM 46492 / JCM 5070 / NBRC 14893 / NCIMB 12804 / NRRL 8165 / MA-4680).